The primary structure comprises 189 residues: Putative manganese efflux pump MntP (189 aa).

6 helical membrane passes run 6 to 26 (IFGI…AAGV), 39 to 59 (LAWH…YAGL), 71 to 91 (WIAF…SFDA), 106 to 126 (LVLL…SLSV), 131 to 151 (VWMP…GGLM), and 169 to 189 (VGAG…GVFY).

Belongs to the MntP (TC 9.B.29) family.

The protein resides in the cell inner membrane. In terms of biological role, probably functions as a manganese efflux pump. This is Putative manganese efflux pump MntP from Desulfosudis oleivorans (strain DSM 6200 / JCM 39069 / Hxd3) (Desulfococcus oleovorans).